Reading from the N-terminus, the 673-residue chain is DNA ligase (673 aa).

NAD(+) contacts are provided by residues 34 to 38 (DAEYD), 83 to 84 (SL), and Glu116. Lys118 functions as the N6-AMP-lysine intermediate in the catalytic mechanism. Arg139, Glu176, Lys293, and Lys317 together coordinate NAD(+). The Zn(2+) site is built by Cys411, Cys414, Cys429, and Cys435. The BRCT domain occupies 595 to 673 (NQQNPFFGKT…EDEFLKWVNS (79 aa)).

Belongs to the NAD-dependent DNA ligase family. LigA subfamily. Mg(2+) is required as a cofactor. The cofactor is Mn(2+).

The enzyme catalyses NAD(+) + (deoxyribonucleotide)n-3'-hydroxyl + 5'-phospho-(deoxyribonucleotide)m = (deoxyribonucleotide)n+m + AMP + beta-nicotinamide D-nucleotide.. Functionally, DNA ligase that catalyzes the formation of phosphodiester linkages between 5'-phosphoryl and 3'-hydroxyl groups in double-stranded DNA using NAD as a coenzyme and as the energy source for the reaction. It is essential for DNA replication and repair of damaged DNA. This Legionella pneumophila (strain Paris) protein is DNA ligase.